Consider the following 446-residue polypeptide: C-type lectin domain family 18 member C (446 aa).

Residues 1–26 (MLHPETSPGRGHLLAVLLALLGTAWA) form the signal peptide. One can recognise an SCP domain in the interval 52–182 (LSLHNRLRSW…AAIEAFVCAY (131 aa)). An N-linked (GlcNAc...) asparagine glycan is attached at asparagine 144. The region spanning 228–261 (PRNPCRMSCQNHGRLNISTCHCHCPPGYTGRYCQ) is the EGF-like domain. 4 cysteine pairs are disulfide-bonded: cysteine 236-cysteine 249, cysteine 251-cysteine 260, cysteine 327-cysteine 432, and cysteine 408-cysteine 424. Residues 306–433 (IDGDCFMVSS…CKTRNRYICQ (128 aa)) form the C-type lectin domain.

As to expression, detected in peripheral blood cells.

It is found in the secreted. It localises to the endoplasmic reticulum. Its subcellular location is the golgi apparatus. The protein localises to the endosome. In terms of biological role, binds polysaccharidesin a Ca(2+)-independent manner with a preferentially binding to fucoidan, beta-glucans and galactans. This is C-type lectin domain family 18 member C (CLEC18C) from Homo sapiens (Human).